The following is a 201-amino-acid chain: Small ribosomal subunit protein uS4 (201 aa).

Residues 1-42 (MARYTGPVTRKSRRLGTDLVGGDQSFEKRPYPPGQHGRARIK) form a disordered region. The S4 RNA-binding domain maps to 91–157 (SRLDNVVYRA…VPFQIARETA (67 aa)).

It belongs to the universal ribosomal protein uS4 family. Part of the 30S ribosomal subunit. Contacts protein S5. The interaction surface between S4 and S5 is involved in control of translational fidelity.

Its function is as follows. One of the primary rRNA binding proteins, it binds directly to 16S rRNA where it nucleates assembly of the body of the 30S subunit. With S5 and S12 plays an important role in translational accuracy. The chain is Small ribosomal subunit protein uS4 from Mycobacterium ulcerans (strain Agy99).